The primary structure comprises 401 residues: 8-amino-7-oxononanoate synthase (401 aa).

Position 19 (R19) interacts with substrate. Pyridoxal 5'-phosphate is bound at residue 106–107; it reads GY. Substrate is bound at residue H131. 3 residues coordinate pyridoxal 5'-phosphate: S176, H204, and T233. Residue K236 is modified to N6-(pyridoxal phosphate)lysine. T350 is a substrate binding site.

Belongs to the class-II pyridoxal-phosphate-dependent aminotransferase family. BioF subfamily. As to quaternary structure, homodimer. Pyridoxal 5'-phosphate serves as cofactor.

The catalysed reaction is 6-carboxyhexanoyl-[ACP] + L-alanine + H(+) = (8S)-8-amino-7-oxononanoate + holo-[ACP] + CO2. It participates in cofactor biosynthesis; biotin biosynthesis. Catalyzes the decarboxylative condensation of pimeloyl-[acyl-carrier protein] and L-alanine to produce 8-amino-7-oxononanoate (AON), [acyl-carrier protein], and carbon dioxide. The protein is 8-amino-7-oxononanoate synthase of Pseudomonas paraeruginosa (strain DSM 24068 / PA7) (Pseudomonas aeruginosa (strain PA7)).